Reading from the N-terminus, the 61-residue chain is Large ribosomal subunit protein uL30 (61 aa).

This sequence belongs to the universal ribosomal protein uL30 family. In terms of assembly, part of the 50S ribosomal subunit.

The sequence is that of Large ribosomal subunit protein uL30 from Bifidobacterium longum (strain DJO10A).